The primary structure comprises 547 residues: Glucose-6-phosphate isomerase (547 aa).

Residue Glu-355 is the Proton donor of the active site. Catalysis depends on residues His-386 and Lys-512.

Belongs to the GPI family.

Its subcellular location is the cytoplasm. It carries out the reaction alpha-D-glucose 6-phosphate = beta-D-fructose 6-phosphate. It participates in carbohydrate biosynthesis; gluconeogenesis. Its pathway is carbohydrate degradation; glycolysis; D-glyceraldehyde 3-phosphate and glycerone phosphate from D-glucose: step 2/4. Functionally, catalyzes the reversible isomerization of glucose-6-phosphate to fructose-6-phosphate. The sequence is that of Glucose-6-phosphate isomerase from Corynebacterium diphtheriae (strain ATCC 700971 / NCTC 13129 / Biotype gravis).